The chain runs to 754 residues: MGGLSAMQRRIDLLVEGGDEYDACSHFRSVVMWDKSLRPPLPRAEPRIRVLHDDVTVDRYGWLRDRENPDVRAYLEAENSYAEQATAHLRRLKTELIAEIEGRQPCEGATPPFQVGPFDYFQGHERGLPHPVWWRRPVTGGSAELVLDPNAIPGADVFYWLGVFEPSDDGRYLAFSVDLIGAERYELRVRDMSDGRDVWRDAGSVGQVVWAADNHTLFFTRERPDRRQHHQIVRLNVGRGNSEVVFEEANERLAVLVRRSQSGAWLFLDVLTTSDMSSYVQRGAAEVWCLPADEPGGQWRRIVMRELGHQIYAEHWYDRFLFRVDDAGPYWRLVSAPIDDPSPSRWEEVVPHRAGVTIDEIHVLEQHLVLLEREGLRPRLISRNRSGRVGAVIVPDEPSCTIRVGLSAGGCYSAARHPFRSSKLTYSVSSFVTPDTFIEHDFANDRSVVLCEARVPGYDATQYLATVVMAEAEDGVQVPISLVARRDRTSPGPVLLSVYGCYGIPRLPSFLAWPSSMTARLSLLDREVAFGIVHVRGGGELGRPWHDAATRDQKRITHTDLISATEGLIERGFATRDGVVIEGKSGGGGTVLATAVFRPNLFRAVVAEVPLADIIDTQLDSTMPYTLKETAEYGDPQDAYEYRYLRSYDPYYNLSPERSLPPTYVDAALDDGQVIYYQPARYVAQRRSCATDRDPDLVFRIRMVGGHSGPSHGPGIAEQAAFRMAWVLDQLRSHAPPPSRKARSAARRSTDPVR.

Catalysis depends on charge relay system residues Ser-585 and His-707. The tract at residues 733–754 (SHAPPPSRKARSAARRSTDPVR) is disordered.

The protein belongs to the peptidase S9A family.

This is an uncharacterized protein from Sinorhizobium fredii (strain NBRC 101917 / NGR234).